Reading from the N-terminus, the 376-residue chain is Chaperone protein DnaJ (376 aa).

Positions 5-70 (DYYEVLGVAK…QKRAAYDQYG (66 aa)) constitute a J domain. The segment at 136 to 214 (GYDTQIRVPS…CHGSGKVKET (79 aa)) adopts a CR-type zinc-finger fold. Cysteine 149, cysteine 152, cysteine 166, cysteine 169, cysteine 188, cysteine 191, cysteine 202, and cysteine 205 together coordinate Zn(2+). 4 CXXCXGXG motif repeats span residues 149 to 156 (CGVCHGSG), 166 to 173 (CPTCHGQG), 188 to 195 (CPKCHGTG), and 202 to 209 (CVHCHGSG).

It belongs to the DnaJ family. As to quaternary structure, homodimer. Zn(2+) is required as a cofactor.

The protein localises to the cytoplasm. Functionally, participates actively in the response to hyperosmotic and heat shock by preventing the aggregation of stress-denatured proteins and by disaggregating proteins, also in an autonomous, DnaK-independent fashion. Unfolded proteins bind initially to DnaJ; upon interaction with the DnaJ-bound protein, DnaK hydrolyzes its bound ATP, resulting in the formation of a stable complex. GrpE releases ADP from DnaK; ATP binding to DnaK triggers the release of the substrate protein, thus completing the reaction cycle. Several rounds of ATP-dependent interactions between DnaJ, DnaK and GrpE are required for fully efficient folding. Also involved, together with DnaK and GrpE, in the DNA replication of plasmids through activation of initiation proteins. The polypeptide is Chaperone protein DnaJ (Burkholderia pseudomallei (strain 1710b)).